Reading from the N-terminus, the 333-residue chain is Ornithine carbamoyltransferase (333 aa).

Carbamoyl phosphate is bound by residues 56–59 (STRT), Gln-83, Arg-107, and 134–137 (HPTQ). Residues Asn-167, Asp-231, and 235-236 (SM) contribute to the L-ornithine site. Residues 273–274 (CL) and Arg-318 contribute to the carbamoyl phosphate site.

It belongs to the aspartate/ornithine carbamoyltransferase superfamily. OTCase family.

It localises to the cytoplasm. It carries out the reaction carbamoyl phosphate + L-ornithine = L-citrulline + phosphate + H(+). The protein operates within amino-acid biosynthesis; L-arginine biosynthesis; L-arginine from L-ornithine and carbamoyl phosphate: step 1/3. In terms of biological role, reversibly catalyzes the transfer of the carbamoyl group from carbamoyl phosphate (CP) to the N(epsilon) atom of ornithine (ORN) to produce L-citrulline. The polypeptide is Ornithine carbamoyltransferase (Staphylococcus aureus (strain MSSA476)).